The sequence spans 577 residues: uncharacterized protein (577 aa).

2 stretches are compositionally biased toward polar residues: residues 1–21 (MSST…QSAS) and 68–87 (SFQN…SKTE). Disordered stretches follow at residues 1–24 (MSST…SAHP) and 68–93 (SFQN…PDDV). The next 12 membrane-spanning stretches (helical) occupy residues 139 to 159 (CILA…AVPA), 174 to 194 (LLTM…WAPL), 204 to 224 (ILIG…GKDI), 232 to 252 (FFAG…LADM), 262 to 282 (ITLF…VGGF), 292 to 312 (WTEY…YLFC), 367 to 387 (PICF…YLLL), 402 to 422 (MGVA…GSGI), 447 to 467 (LPPM…LSWS), 473 to 493 (VNWV…LLIF), 504 to 526 (YLFR…AAGF), and 543 to 563 (GSLL…FFFF).

It belongs to the major facilitator superfamily. CAR1 family.

The protein localises to the endoplasmic reticulum. The protein resides in the membrane. This is an uncharacterized protein from Schizosaccharomyces pombe (strain 972 / ATCC 24843) (Fission yeast).